A 425-amino-acid chain; its full sequence is Xylose isomerase (425 aa).

Active-site residues include His-101 and Asp-104. Positions 232, 268, 271, 296, 307, 309, and 339 each coordinate Mg(2+).

The protein belongs to the xylose isomerase family. In terms of assembly, homotetramer. The cofactor is Mg(2+).

The protein localises to the cytoplasm. The enzyme catalyses alpha-D-xylose = alpha-D-xylulofuranose. The polypeptide is Xylose isomerase (Salmonella paratyphi A (strain ATCC 9150 / SARB42)).